A 249-amino-acid polypeptide reads, in one-letter code: Chitooligosaccharide deacetylase (249 aa).

Mg(2+) contacts are provided by H61 and H125.

This sequence belongs to the YdjC deacetylase family. ChbG subfamily. Homodimer. Requires Mg(2+) as cofactor.

The protein resides in the cytoplasm. The enzyme catalyses N,N'-diacetylchitobiose + H2O = N-acetyl-beta-D-glucosaminyl-(1-&gt;4)-D-glucosamine + acetate. It catalyses the reaction diacetylchitobiose-6'-phosphate + H2O = N'-monoacetylchitobiose-6'-phosphate + acetate. Its pathway is glycan degradation; chitin degradation. In terms of biological role, involved in the degradation of chitin. ChbG is essential for growth on the acetylated chitooligosaccharides chitobiose and chitotriose but is dispensable for growth on cellobiose and chitosan dimer, the deacetylated form of chitobiose. Deacetylation of chitobiose-6-P and chitotriose-6-P is necessary for both the activation of the chb promoter by the regulatory protein ChbR and the hydrolysis of phosphorylated beta-glucosides by the phospho-beta-glucosidase ChbF. Catalyzes the removal of only one acetyl group from chitobiose-6-P to yield monoacetylchitobiose-6-P, the inducer of ChbR and the substrate of ChbF. This chain is Chitooligosaccharide deacetylase, found in Escherichia coli (strain K12 / MC4100 / BW2952).